A 75-amino-acid polypeptide reads, in one-letter code: ATP synthase subunit c (75 aa).

2 consecutive transmembrane segments (helical) span residues 4–24 and 54–74; these read GLIAIGIGISMISGLGVGLGQ and AVAESAAIYALVISILLMFAF.

Belongs to the ATPase C chain family. F-type ATPases have 2 components, F(1) - the catalytic core - and F(0) - the membrane proton channel. F(1) has five subunits: alpha(3), beta(3), gamma(1), delta(1), epsilon(1). F(0) has three main subunits: a(1), b(2) and c(10-14). The alpha and beta chains form an alternating ring which encloses part of the gamma chain. F(1) is attached to F(0) by a central stalk formed by the gamma and epsilon chains, while a peripheral stalk is formed by the delta and b chains.

It is found in the cell membrane. Its function is as follows. F(1)F(0) ATP synthase produces ATP from ADP in the presence of a proton or sodium gradient. F-type ATPases consist of two structural domains, F(1) containing the extramembraneous catalytic core and F(0) containing the membrane proton channel, linked together by a central stalk and a peripheral stalk. During catalysis, ATP synthesis in the catalytic domain of F(1) is coupled via a rotary mechanism of the central stalk subunits to proton translocation. Key component of the F(0) channel; it plays a direct role in translocation across the membrane. A homomeric c-ring of between 10-14 subunits forms the central stalk rotor element with the F(1) delta and epsilon subunits. This Mycoplasmopsis agalactiae (strain NCTC 10123 / CIP 59.7 / PG2) (Mycoplasma agalactiae) protein is ATP synthase subunit c.